The primary structure comprises 493 residues: Probable cytochrome P450 313a2 (493 aa).

Heme is bound at residue Cys-438.

It belongs to the cytochrome P450 family. Requires heme as cofactor.

It is found in the endoplasmic reticulum membrane. It localises to the microsome membrane. Its function is as follows. May be involved in the metabolism of insect hormones and in the breakdown of synthetic insecticides. This Drosophila melanogaster (Fruit fly) protein is Probable cytochrome P450 313a2 (Cyp313a2).